The chain runs to 644 residues: Magnetosome protein MamZ (644 aa).

Residues M1–I427 are major facilitator domain. 18 consecutive transmembrane segments (helical) span residues W22–I42, A63–L83, I92–Q112, V113–T133, L159–M179, P185–L205, V254–V274, A281–W301, I311–F331, W337–L357, I369–V389, A403–L423, T440–G460, V478–A498, I518–W538, P553–A573, L588–N608, and G612–F629. Residues W488–V599 form a ferric reductase-like domain region.

The protein in the N-terminal section; belongs to the major facilitator superfamily.

It is found in the magnetosome membrane. In terms of biological role, required for correct biomineralization of the magnetosome; probably converts and then transports some form of iron. It is partially functionally redundant with MamH. May function with MamX, MamY amd Mms6. This chain is Magnetosome protein MamZ, found in Paramagnetospirillum magneticum (strain ATCC 700264 / AMB-1) (Magnetospirillum magneticum).